We begin with the raw amino-acid sequence, 483 residues long: MALCLWLFLVLPICCWCQGAVDLGDSGVFQPQSALTDMEFASVSTYRGPGNTDPRPNKELPILLWWSSNLFPHFPGDTERVDCAHSSCLVTSNRKVQLYRRTASIIFYGTDFRAYEAPLPRLPHQTWALFHEESPMNNYLLSHSVGIRLFNYTATFRRESDYPLTLQWLPSLDYLLAPTAISLQEKNHWRQAGLAPVLYMQSHCDVPSDRDRFVQELMKYIEIDSYGKCLNNKPLPEYLEDTSTATSEDRRFMSFVARYKFHLALENGLCPDYMTEKLWRPMHQGCVPIYRGSTTVADWLPNNHSAILVEDFSTPRELADFIKALDQDDVEYLRYLKYKTPSEITNLRLLEGLESREWGVNDMSKPNYLNGFECFVCDKENERLAARKAHRKNPKQNQPPQPKMANSSHMGCPLPSPGYGPVENVEPNDSWLQMWPQDYWQSLDQAEGLESLIRHNVSEPSLLWQHIQSIAVRRARGLSNDSR.

A topological domain (cytoplasmic) is located at residue methionine 1. A helical; Signal-anchor for type II membrane protein transmembrane segment spans residues 2–21 (ALCLWLFLVLPICCWCQGAV). Over 22–483 (DLGDSGVFQP…RARGLSNDSR (462 aa)) the chain is Lumenal. 2 N-linked (GlcNAc...) asparagine glycosylation sites follow: asparagine 151 and asparagine 303. The cysteines at positions 374 and 377 are disulfide-linked. The tract at residues 387 to 425 (RKAHRKNPKQNQPPQPKMANSSHMGCPLPSPGYGPVENV) is disordered. 4 N-linked (GlcNAc...) asparagine glycosylation sites follow: asparagine 406, asparagine 428, asparagine 456, and asparagine 480.

This sequence belongs to the glycosyltransferase 10 family.

The protein resides in the endoplasmic reticulum membrane. It catalyses the reaction L-threonyl-[protein] + GDP-beta-L-fucose = 3-O-(alpha-L-fucosyl)-L-threonyl-[protein] + GDP + H(+). The enzyme catalyses L-seryl-[protein] + GDP-beta-L-fucose = 3-O-(alpha-L-fucosyl)-L-seryl-[protein] + GDP + H(+). It functions in the pathway protein modification; protein glycosylation. Its function is as follows. Protein O-fucosyltransferase that specifically catalyzes O-fucosylation of serine or threonine residues in EMI domains of target proteins. Attaches fucose through an O-glycosidic linkage. O-fucosylation of EMI domain-containing proteins may be required for facilitating protein folding and secretion. In Danio rerio (Zebrafish), this protein is GDP-fucose protein O-fucosyltransferase 4 (fut11).